The primary structure comprises 156 residues: Transmembrane inner ear expressed protein (156 aa).

The first 27 residues, 1–27, serve as a signal peptide directing secretion; it reads MAGWPGAGPLCVLGGAALGVCLAGVAG. The Extracellular portion of the chain corresponds to 28–57; sequence QLVEPSTAPPKPKPPPLTKETVVFWDMRLW. Residues 58–78 form a helical membrane-spanning segment; sequence HVVGIFSLFVLSIIITLCCVF. Residues 79-156 lie on the Cytoplasmic side of the membrane; sequence NCRVPRTRKE…NEAKKKKGEK (78 aa). The interval 113 to 135 is disordered; the sequence is NELTEVPGEDKKKKKKKKKDSVD.

In terms of assembly, forms the MET channel composed of TMC (TMC1 or TMC2), TMIE, TOMT, CIB (CIB2 or CIB3), LHPL5 and PCDH15. As to expression, expressed in many tissues.

The protein localises to the membrane. Functionally, auxiliary subunit of the mechanotransducer (MET) non-specific cation channel complex located at the tips of stereocilia of cochlear hair cells and that mediates sensory transduction in the auditory system. The MET complex is composed of two dimeric pore-forming ion-conducting transmembrane TMC (TMC1 or TMC2) subunits, and aided by several auxiliary proteins including LHFPL5, TMIE, CIB2/3 and TOMT, and the tip-link PCDH15. May contribute to the formation of the pore. This is Transmembrane inner ear expressed protein (TMIE) from Homo sapiens (Human).